Reading from the N-terminus, the 272-residue chain is Flagellin (272 aa).

It belongs to the bacterial flagellin family.

It is found in the secreted. The protein localises to the bacterial flagellum. In terms of biological role, flagellin is the subunit protein which polymerizes to form the filaments of bacterial flagella. The chain is Flagellin (hag) from Halalkalibacterium halodurans (strain ATCC BAA-125 / DSM 18197 / FERM 7344 / JCM 9153 / C-125) (Bacillus halodurans).